A 172-amino-acid polypeptide reads, in one-letter code: C-phycocyanin beta subunit (172 aa).

At asparagine 72 the chain carries N4-methylasparagine. The (2R,3E)-phycocyanobilin site is built by cysteine 82 and cysteine 153.

It belongs to the phycobiliprotein family. Heterodimer of an alpha and a beta subunit, which further assembles into trimers and the trimers into hexamers. In terms of processing, contains two covalently linked bilin chromophores.

The protein localises to the cellular thylakoid membrane. Its function is as follows. Light-harvesting photosynthetic bile pigment-protein from the phycobiliprotein complex (phycobilisome, PBS). Phycocyanin is the major phycobiliprotein in the PBS rod. The chain is C-phycocyanin beta subunit (cpcB) from Synechocystis sp. (strain PCC 6701).